We begin with the raw amino-acid sequence, 148 residues long: Receptor activity-modifying protein 3 (148 aa).

A signal peptide spans 1 to 23; the sequence is METGALRRPQLLPLLLLLCGGCP. Topologically, residues 24-113 are extracellular; sequence RAGGCNETGM…CTVDRVHLED (90 aa). Residues N29, N58, N71, and N103 are each glycosylated (N-linked (GlcNAc...) asparagine). 2 disulfides stabilise this stretch: C40-C72 and C57-C104. The chain crosses the membrane as a helical span at residues 114 to 138; it reads PPDEVLIPLIVIPVVLTVAMAGLVV. The Cytoplasmic portion of the chain corresponds to 139–148; the sequence is WRSKRTDTLL.

This sequence belongs to the RAMP family. As to quaternary structure, heterodimer of CALCRL and RAMP3; interaction induces allosteric modulation of CALCRL function and ligand specificity for adrenomedullin/ADM and intermedin/ADM2. Heterodimer of CALCR and RAMP3; interaction form the receptor complex AMYR3 for amylin/IAPP. Interacts with GPER1. Strongly expressed in lung, breast, immune system and fetal tissues.

The protein resides in the cell membrane. It is found in the membrane. Functionally, accessory protein that interacts with and modulates the function of G-protein coupled receptors including calcitonin gene-related peptide type 1 receptor (CALCRL), calcitonin receptor (CALCR) and G-protein coupled estrogen receptor 1 (GPER1). Required for the transport of CALCRL and GPER1 receptors to the plasma membrane. Plays a role in cardioprotection by reducing cardiac hypertrophy and perivascular fibrosis in a GPER1-dependent manner. Together with CALCRL, form a receptor complex for adrenomedullin/ADM and intermedin/ADM2. Together with CALCR, act as a receptor complex for amylin/IAPP. This chain is Receptor activity-modifying protein 3, found in Homo sapiens (Human).